Consider the following 275-residue polypeptide: ATP synthase subunit delta (275 aa).

It belongs to the ATPase delta chain family. In terms of assembly, F-type ATPases have 2 components, F(1) - the catalytic core - and F(0) - the membrane proton channel. F(1) has five subunits: alpha(3), beta(3), gamma(1), delta(1), epsilon(1). F(0) has three main subunits: a(1), b(2) and c(10-14). The alpha and beta chains form an alternating ring which encloses part of the gamma chain. F(1) is attached to F(0) by a central stalk formed by the gamma and epsilon chains, while a peripheral stalk is formed by the delta and b chains.

The protein resides in the cell membrane. F(1)F(0) ATP synthase produces ATP from ADP in the presence of a proton or sodium gradient. F-type ATPases consist of two structural domains, F(1) containing the extramembraneous catalytic core and F(0) containing the membrane proton channel, linked together by a central stalk and a peripheral stalk. During catalysis, ATP synthesis in the catalytic domain of F(1) is coupled via a rotary mechanism of the central stalk subunits to proton translocation. In terms of biological role, this protein is part of the stalk that links CF(0) to CF(1). It either transmits conformational changes from CF(0) to CF(1) or is implicated in proton conduction. The chain is ATP synthase subunit delta from Arthrobacter sp. (strain FB24).